A 352-amino-acid polypeptide reads, in one-letter code: DNA polymerase IV (352 aa).

The region spanning 3-187 (VLFVDFDYFY…LDIADVPGIG (185 aa)) is the UmuC domain. Residues D7 and D105 each contribute to the Mg(2+) site. Residue E106 is part of the active site.

The protein belongs to the DNA polymerase type-Y family. As to quaternary structure, monomer. Interacts with the PCNA heterotrimer via PCNA1. The cofactor is Mg(2+).

Its subcellular location is the cytoplasm. It catalyses the reaction DNA(n) + a 2'-deoxyribonucleoside 5'-triphosphate = DNA(n+1) + diphosphate. Its function is as follows. Poorly processive, error-prone DNA polymerase involved in untargeted mutagenesis. Copies undamaged DNA at stalled replication forks, which arise in vivo from mismatched or misaligned primer ends. These misaligned primers can be extended by PolIV. Exhibits no 3'-5' exonuclease (proofreading) activity. It is involved in translesional synthesis. This is DNA polymerase IV (dbh) from Saccharolobus solfataricus (strain ATCC 35092 / DSM 1617 / JCM 11322 / P2) (Sulfolobus solfataricus).